A 141-amino-acid chain; its full sequence is Large ribosomal subunit protein uL11 (141 aa).

The protein belongs to the universal ribosomal protein uL11 family. Part of the ribosomal stalk of the 50S ribosomal subunit. Interacts with L10 and the large rRNA to form the base of the stalk. L10 forms an elongated spine to which L12 dimers bind in a sequential fashion forming a multimeric L10(L12)X complex. Post-translationally, one or more lysine residues are methylated.

In terms of biological role, forms part of the ribosomal stalk which helps the ribosome interact with GTP-bound translation factors. In Helicobacter pylori (strain P12), this protein is Large ribosomal subunit protein uL11.